A 130-amino-acid polypeptide reads, in one-letter code: MAENQYYGTGRRKSSAARVFIKPGSGNIVINKRALEEYFGRPTSCMVVKQPLELVDMVEKLDLYITVKGGGISGQAGAIRHGITRALMEYDESLRPALRAAGYVTRDARCVERKKVGLRKARRRPQFSKR.

It belongs to the universal ribosomal protein uS9 family.

The chain is Small ribosomal subunit protein uS9 from Vibrio vulnificus (strain CMCP6).